The primary structure comprises 89 residues: Putative defensin-like protein 40 (89 aa).

The signal sequence occupies residues 1-26 (MAGIANGVGLLISFMLICGGMPKGHA). Disulfide bonds link Cys-33/Cys-88, Cys-46/Cys-69, Cys-55/Cys-81, and Cys-59/Cys-83.

It belongs to the DEFL family.

It is found in the secreted. This is Putative defensin-like protein 40 from Arabidopsis thaliana (Mouse-ear cress).